A 353-amino-acid polypeptide reads, in one-letter code: Protein pelota homolog (353 aa).

It belongs to the eukaryotic release factor 1 family. Pelota subfamily. Monomer. It depends on a divalent metal cation as a cofactor.

It is found in the cytoplasm. May function in recognizing stalled ribosomes, interact with stem-loop structures in stalled mRNA molecules, and effect endonucleolytic cleavage of the mRNA. May play a role in the release non-functional ribosomes and degradation of damaged mRNAs. Has endoribonuclease activity. This chain is Protein pelota homolog, found in Methanobrevibacter smithii (strain ATCC 35061 / DSM 861 / OCM 144 / PS).